We begin with the raw amino-acid sequence, 158 residues long: Transcriptional regulatory protein DoeX (158 aa).

In terms of domain architecture, HTH asnC-type spans 3-64 (LDRYDLKILE…RLNTDVLVKR (62 aa)). The H-T-H motif DNA-binding region spans 22-41 (KSKLAEAINLSVSPCWERVR).

It localises to the cytoplasm. Acts as a transcriptional regulator. It binds DNA specifically to a fragment from the doeA promoter region. This chain is Transcriptional regulatory protein DoeX (doeX), found in Halomonas elongata (strain ATCC 33173 / DSM 2581 / NBRC 15536 / NCIMB 2198 / 1H9).